The sequence spans 611 residues: UvrABC system protein C (611 aa).

One can recognise a GIY-YIG domain in the interval threonine 14 to isoleucine 91. The UVR domain maps to aspartate 196–leucine 231. The interval lysine 587 to glutamate 611 is disordered.

This sequence belongs to the UvrC family. As to quaternary structure, interacts with UvrB in an incision complex.

Its subcellular location is the cytoplasm. Its function is as follows. The UvrABC repair system catalyzes the recognition and processing of DNA lesions. UvrC both incises the 5' and 3' sides of the lesion. The N-terminal half is responsible for the 3' incision and the C-terminal half is responsible for the 5' incision. The protein is UvrABC system protein C of Streptococcus sanguinis (strain SK36).